Consider the following 154-residue polypeptide: 6,7-dimethyl-8-ribityllumazine synthase (154 aa).

Residues Trp-22, 56–58, and 80–82 contribute to the 5-amino-6-(D-ribitylamino)uracil site; these read SHE and AVI. 85-86 provides a ligand contact to (2S)-2-hydroxy-3-oxobutyl phosphate; the sequence is DT. His-88 serves as the catalytic Proton donor. Phe-113 serves as a coordination point for 5-amino-6-(D-ribitylamino)uracil. Arg-127 lines the (2S)-2-hydroxy-3-oxobutyl phosphate pocket.

This sequence belongs to the DMRL synthase family.

It carries out the reaction (2S)-2-hydroxy-3-oxobutyl phosphate + 5-amino-6-(D-ribitylamino)uracil = 6,7-dimethyl-8-(1-D-ribityl)lumazine + phosphate + 2 H2O + H(+). It functions in the pathway cofactor biosynthesis; riboflavin biosynthesis; riboflavin from 2-hydroxy-3-oxobutyl phosphate and 5-amino-6-(D-ribitylamino)uracil: step 1/2. Catalyzes the formation of 6,7-dimethyl-8-ribityllumazine by condensation of 5-amino-6-(D-ribitylamino)uracil with 3,4-dihydroxy-2-butanone 4-phosphate. This is the penultimate step in the biosynthesis of riboflavin. This is 6,7-dimethyl-8-ribityllumazine synthase from Deinococcus geothermalis (strain DSM 11300 / CIP 105573 / AG-3a).